We begin with the raw amino-acid sequence, 191 residues long: Stress response regulator protein 1 (191 aa).

The 120-residue stretch at 62–181 (SFLLVDDNEI…TNYILQKIEQ (120 aa)) folds into the Response regulatory domain. 4-aspartylphosphate is present on aspartate 114.

In terms of biological role, required for stress adaptation, morphogenesis and virulence. The sequence is that of Stress response regulator protein 1 (SRR1) from Clavispora lusitaniae (strain ATCC 42720) (Yeast).